The following is a 370-amino-acid chain: UDP-N-acetylglucosamine--N-acetylmuramyl-(pentapeptide) pyrophosphoryl-undecaprenol N-acetylglucosamine transferase (370 aa).

Residues 15–17 (TGG), Asn-126, Arg-169, Ser-197, and Gln-299 each bind UDP-N-acetyl-alpha-D-glucosamine.

Belongs to the glycosyltransferase 28 family. MurG subfamily.

The protein resides in the cell inner membrane. It carries out the reaction di-trans,octa-cis-undecaprenyl diphospho-N-acetyl-alpha-D-muramoyl-L-alanyl-D-glutamyl-meso-2,6-diaminopimeloyl-D-alanyl-D-alanine + UDP-N-acetyl-alpha-D-glucosamine = di-trans,octa-cis-undecaprenyl diphospho-[N-acetyl-alpha-D-glucosaminyl-(1-&gt;4)]-N-acetyl-alpha-D-muramoyl-L-alanyl-D-glutamyl-meso-2,6-diaminopimeloyl-D-alanyl-D-alanine + UDP + H(+). It functions in the pathway cell wall biogenesis; peptidoglycan biosynthesis. Cell wall formation. Catalyzes the transfer of a GlcNAc subunit on undecaprenyl-pyrophosphoryl-MurNAc-pentapeptide (lipid intermediate I) to form undecaprenyl-pyrophosphoryl-MurNAc-(pentapeptide)GlcNAc (lipid intermediate II). The protein is UDP-N-acetylglucosamine--N-acetylmuramyl-(pentapeptide) pyrophosphoryl-undecaprenol N-acetylglucosamine transferase of Methylorubrum populi (strain ATCC BAA-705 / NCIMB 13946 / BJ001) (Methylobacterium populi).